Reading from the N-terminus, the 375-residue chain is Anhydro-N-acetylmuramic acid kinase (375 aa).

An ATP-binding site is contributed by 13-20 (GTSMDGVD).

This sequence belongs to the anhydro-N-acetylmuramic acid kinase family.

It catalyses the reaction 1,6-anhydro-N-acetyl-beta-muramate + ATP + H2O = N-acetyl-D-muramate 6-phosphate + ADP + H(+). It participates in amino-sugar metabolism; 1,6-anhydro-N-acetylmuramate degradation. The protein operates within cell wall biogenesis; peptidoglycan recycling. In terms of biological role, catalyzes the specific phosphorylation of 1,6-anhydro-N-acetylmuramic acid (anhMurNAc) with the simultaneous cleavage of the 1,6-anhydro ring, generating MurNAc-6-P. Is required for the utilization of anhMurNAc either imported from the medium or derived from its own cell wall murein, and thus plays a role in cell wall recycling. In Pelagibacter ubique (strain HTCC1062), this protein is Anhydro-N-acetylmuramic acid kinase.